A 1364-amino-acid polypeptide reads, in one-letter code: DNA-directed RNA polymerase subunit beta (1364 aa).

Belongs to the RNA polymerase beta chain family. As to quaternary structure, the RNAP catalytic core consists of 2 alpha, 1 beta, 1 beta' and 1 omega subunit. When a sigma factor is associated with the core the holoenzyme is formed, which can initiate transcription.

The enzyme catalyses RNA(n) + a ribonucleoside 5'-triphosphate = RNA(n+1) + diphosphate. Its function is as follows. DNA-dependent RNA polymerase catalyzes the transcription of DNA into RNA using the four ribonucleoside triphosphates as substrates. In Desulfatibacillum aliphaticivorans, this protein is DNA-directed RNA polymerase subunit beta.